The chain runs to 658 residues: UvrABC system protein B (658 aa).

Positions 26 to 413 (EGINSGKKKQ…SPEVIEQIIR (388 aa)) constitute a Helicase ATP-binding domain. 39–46 (GATGTGKT) provides a ligand contact to ATP. A Beta-hairpin motif is present at residues 92–115 (YYDYYQPEAYVPQTDTFIEKDAQI). The Helicase C-terminal domain occupies 430 to 596 (QIDDLLGEIQ…TIQKGVRDVI (167 aa)). The UVR domain occupies 622–657 (EKTIAKMEAEMKEAAKALDFERAAELRDLLLELKAE).

This sequence belongs to the UvrB family. Forms a heterotetramer with UvrA during the search for lesions. Interacts with UvrC in an incision complex.

It is found in the cytoplasm. Functionally, the UvrABC repair system catalyzes the recognition and processing of DNA lesions. A damage recognition complex composed of 2 UvrA and 2 UvrB subunits scans DNA for abnormalities. Upon binding of the UvrA(2)B(2) complex to a putative damaged site, the DNA wraps around one UvrB monomer. DNA wrap is dependent on ATP binding by UvrB and probably causes local melting of the DNA helix, facilitating insertion of UvrB beta-hairpin between the DNA strands. Then UvrB probes one DNA strand for the presence of a lesion. If a lesion is found the UvrA subunits dissociate and the UvrB-DNA preincision complex is formed. This complex is subsequently bound by UvrC and the second UvrB is released. If no lesion is found, the DNA wraps around the other UvrB subunit that will check the other stand for damage. This chain is UvrABC system protein B, found in Bacillus anthracis.